The chain runs to 533 residues: Conglutin beta 2 (533 aa).

The signal sequence occupies residues 1 to 30 (MGKMRVRFPTLVLVLGIVFLMAVSIGIAYG). Positions 31-108 (EKDVLKSHER…EQQQGSPSYS (78 aa)) are excised as a propeptide. Composition is skewed to basic and acidic residues over residues 37-51 (SHER…EWQP) and 79-99 (SGYE…REQE). 2 disordered regions span residues 37–123 (SHER…QRFQ) and 315–337 (KHAQ…LRSN). 2 consecutive Cupin type-1 domains span residues 115-273 (YHFS…EEIQ) and 332-494 (FNLR…EDIE). 2 N-linked (GlcNAc...) asparagine glycosylation sites follow: Asn-363 and Asn-444. The interval 503–533 (SYFANGQPQQQQQQQSEKEGRRGRRGSSLPF) is disordered.

The protein belongs to the 7S seed storage protein family. As to quaternary structure, multimers. Give rise to a complex array of processed forms, due to a large number of processing sites and changes in glycosylation.

In terms of biological role, seed storage protein. Accumulates during seed development and is hydrolyzed after germination to provide a carbon and nitrogen source for the developing seedling. Has a lectin-like activity. This is Conglutin beta 2 from Lupinus albus (White lupine).